Consider the following 72-residue polypeptide: Protein CYSTEINE-RICH TRANSMEMBRANE MODULE 1 (72 aa).

A compositionally biased stretch (polar residues) spans 1 to 11 (MSQYDHNQSAG). The tract at residues 1–46 (MSQYDHNQSAGANPPPPMSTCTSPPPPIGYPTNQPSHGSVAQGKVE) is disordered. Pro residues predominate over residues 13–29 (NPPPPMSTCTSPPPPIG). The helical transmembrane segment at 49 to 65 (SKGDGFFKGCLAAMCCC) threads the bilayer.

This sequence belongs to the CYSTM1 family. As to quaternary structure, heterodimers. Binds weakly to CYSTM7 and WIH1/CYSTM13. As to expression, mostly expressed in roots, flowers and siliques and, to a lower extent, in stems and leaves.

The protein resides in the cell membrane. It is found in the nucleus. In terms of biological role, may be involved in aluminium (Al) tolerance. Involved in resistance to abiotic stress. This Arabidopsis thaliana (Mouse-ear cress) protein is Protein CYSTEINE-RICH TRANSMEMBRANE MODULE 1.